Consider the following 197-residue polypeptide: Pyridoxal 5'-phosphate synthase subunit PdxT (197 aa).

Residue 52–54 (GES) coordinates L-glutamine. C84 acts as the Nucleophile in catalysis. L-glutamine-binding positions include R116 and 143-144 (IR). Catalysis depends on charge relay system residues H179 and E181.

It belongs to the glutaminase PdxT/SNO family. In terms of assembly, in the presence of PdxS, forms a dodecamer of heterodimers. Only shows activity in the heterodimer.

The enzyme catalyses aldehydo-D-ribose 5-phosphate + D-glyceraldehyde 3-phosphate + L-glutamine = pyridoxal 5'-phosphate + L-glutamate + phosphate + 3 H2O + H(+). It carries out the reaction L-glutamine + H2O = L-glutamate + NH4(+). It functions in the pathway cofactor biosynthesis; pyridoxal 5'-phosphate biosynthesis. Functionally, catalyzes the hydrolysis of glutamine to glutamate and ammonia as part of the biosynthesis of pyridoxal 5'-phosphate. The resulting ammonia molecule is channeled to the active site of PdxS. This Ignicoccus hospitalis (strain KIN4/I / DSM 18386 / JCM 14125) protein is Pyridoxal 5'-phosphate synthase subunit PdxT.